The primary structure comprises 100 residues: UPF0213 protein YhbQ (100 aa).

The GIY-YIG domain maps to 2–77; that stretch reads TPWFLYLIRT…KQLTKRQKER (76 aa).

Belongs to the UPF0213 family.

The chain is UPF0213 protein YhbQ from Escherichia coli O139:H28 (strain E24377A / ETEC).